The sequence spans 580 residues: M-phase inducer phosphatase 2 (580 aa).

Residues 1–24 form a disordered region; sequence MEVPQPEPAPGSALSPAGVCGGAQ. Residue Ser-42 is modified to Phosphoserine. Low complexity predominate over residues 89 to 107; the sequence is SLSRRASESSLSSESSESS. Disordered regions lie at residues 89 to 117 and 165 to 196; these read SLSR…DSPS and NITN…ENDG. Position 169 is a phosphoserine; by MELK (Ser-169). Phosphoserine is present on Ser-249. Phosphoserine; by MELK and MAPK14 is present on Ser-323. Residues 331–370 form a disordered region; sequence PILKRLERPQDRDTPVQNKRRRSVTPPEEQQEAEEPKARV. Over residues 334-344 the composition is skewed to basic and acidic residues; sequence KRLERPQDRDT. Phosphoserine; by AURKA is present on Ser-353. Phosphoserine; by BRSK1 and MAPK14 is present on Ser-375. Residues 431 to 538 form the Rhodanese domain; the sequence is IVDKFVIVDC…FFPQHPNFCE (108 aa). At Ser-470 the chain carries Phosphoserine. The active site involves Cys-487. Residue Ser-563 is modified to Phosphoserine.

Belongs to the MPI phosphatase family. Interacts with MAPK14 and 14-3-3 proteins. Phosphorylated by BRSK1 in vitro. Phosphorylated by CHEK1, which inhibits the activity of this protein. Phosphorylation at Ser-353 by AURKA might locally participate in the control of the onset of mitosis. Phosphorylation by MELK at Ser-169 promotes localization to the centrosome and the spindle poles during mitosis. Phosphorylation at Ser-323 and Ser-375 by MAPK14 is required for binding to 14-3-3 proteins.

The protein localises to the cytoplasm. It is found in the cytoskeleton. The protein resides in the microtubule organizing center. It localises to the centrosome. Its subcellular location is the spindle pole. The catalysed reaction is O-phospho-L-tyrosyl-[protein] + H2O = L-tyrosyl-[protein] + phosphate. With respect to regulation, stimulated by B-type cyclins. In terms of biological role, tyrosine protein phosphatase which functions as a dosage-dependent inducer of mitotic progression. Directly dephosphorylates CDK1 and stimulates its kinase activity. Required for G2/M phases of the cell cycle progression and abscission during cytokinesis in a ECT2-dependent manner. The three isoforms seem to have a different level of activity. The protein is M-phase inducer phosphatase 2 (CDC25B) of Homo sapiens (Human).